Consider the following 332-residue polypeptide: dTDP-3,4-didehydro-2,6-dideoxy-alpha-D-glucose 3-reductase (332 aa).

12–18 serves as a coordination point for NADP(+); the sequence is CASFAWR. Arg-19 is a binding site for substrate. Residues 37 to 38, Tyr-58, Leu-74, and His-79 contribute to the NADP(+) site; that span reads SR. Lys-97 acts as the Proton donor in catalysis. NADP(+) contacts are provided by Arg-165 and Asp-177. Substrate contacts are provided by Tyr-235 and Thr-255.

It belongs to the Gfo/Idh/MocA family. In terms of assembly, monomer.

The catalysed reaction is dTDP-4-dehydro-2,6-dideoxy-alpha-D-glucose + NADP(+) = dTDP-3,4-didehydro-2,6-dideoxy-alpha-D-glucose + NADPH + H(+). In terms of biological role, involved in the biosynthesis of forosamine ((4-dimethylamino)-2,3,4,6-tetradeoxy-alpha-D-threo-hexopyranose), a highly deoxygenated sugar component of several bioactive natural products such as the insecticidal spinosyns A and D. Catalyzes the reduction of the C-3 keto moiety of dTDP-3,4-diketo-2,6-dideoxy-alpha-D-glucose to yield dTDP-4-keto-2,6-dideoxy-alpha-D-glucose. NADPH is the better reductant, however NADH can also be used. The sequence is that of dTDP-3,4-didehydro-2,6-dideoxy-alpha-D-glucose 3-reductase from Saccharopolyspora spinosa.